We begin with the raw amino-acid sequence, 518 residues long: Glutamate--cysteine ligase (518 aa).

This sequence belongs to the glutamate--cysteine ligase type 1 family. Type 1 subfamily.

It catalyses the reaction L-cysteine + L-glutamate + ATP = gamma-L-glutamyl-L-cysteine + ADP + phosphate + H(+). It functions in the pathway sulfur metabolism; glutathione biosynthesis; glutathione from L-cysteine and L-glutamate: step 1/2. In Shigella dysenteriae serotype 1 (strain Sd197), this protein is Glutamate--cysteine ligase.